A 2315-amino-acid polypeptide reads, in one-letter code: Receptor-type tyrosine-protein phosphatase zeta (2315 aa).

Residues 1–24 (MRILKRFLACIQLLCVCRLDWANG) form the signal peptide. Residues 25–1636 (YYRQQRKLVE…LAEGLESEKK (1612 aa)) lie on the Extracellular side of the membrane. The 265-residue stretch at 36–300 (IGWSYTGALN…KFSRQVFSSY (265 aa)) folds into the Alpha-carbonic anhydrase domain. Intrachain disulfides connect C56–C240 and C133–C264. N105, N134, N223, N232, N324, and N381 each carry an N-linked (GlcNAc...) asparagine glycan. The Fibronectin type-III domain occupies 314 to 413 (EPENVQADPE…LIVDMPTDNP (100 aa)). Disordered regions lie at residues 442–462 (IVNP…PQIS) and 477–507 (AKTN…SQPV). The segment covering 496-507 (PNTSLNSTSQPV) has biased composition (polar residues). 3 N-linked (GlcNAc...) asparagine glycosylation sites follow: N497, N501, and N552. O-linked (Xyl...) (chondroitin sulfate) serine glycosylation is present at S587. Residues N602 and N629 are each glycosylated (N-linked (GlcNAc...) asparagine). Residues 628–650 (RNASEDSTSSGSEESLKDPSMEG) form a disordered region. S637 is subject to Phosphoserine; alternate. Residue S637 is glycosylated (O-linked (Xyl...) (chondroitin sulfate) serine; alternate). At S639 the chain carries Phosphoserine. The N-linked (GlcNAc...) asparagine glycan is linked to N677. O-linked (Xyl...) (chondroitin sulfate) serine glycosylation is present at S997. N-linked (GlcNAc...) asparagine glycosylation is found at N1017, N1050, N1082, and N1122. A compositionally biased stretch (polar residues) spans 1123–1138 (FSVQPTHTVSQASGDT). Disordered stretches follow at residues 1123–1160 (FSVQ…SSEM), 1397–1523 (KATS…EEND), 1543–1572 (LTSD…SFAD), and 1584–1621 (AGDS…NSSH). The span at 1145 to 1159 (SANSEPASSDPASSE) shows a compositional bias: low complexity. The span at 1417–1432 (EDGDTDDDGDDDDDDR) shows a compositional bias: acidic residues. Over residues 1450-1465 (ESQEKVMNDSDTHENS) the composition is skewed to basic and acidic residues. N1457 is a glycosylation site (N-linked (GlcNAc...) asparagine). Polar residues-rich tracts occupy residues 1466 to 1479 (LMDQ…SLSE) and 1487 to 1513 (VTSV…GLSQ). Residues S1549 and S1551 are each glycosylated (O-linked (Xyl...) (chondroitin sulfate) serine). 2 stretches are compositionally biased toward polar residues: residues 1554-1572 (GTSD…SFAD) and 1593-1606 (FPQS…SENS). The N-linked (GlcNAc...) asparagine glycan is linked to N1562. N-linked (GlcNAc...) asparagine glycosylation is present at N1618. A helical membrane pass occupies residues 1637–1662 (AVIPLVIVSALTFICLVVLVGILIYW). Residues 1663-2315 (RKCFQTAHFY…NIAESLESLV (653 aa)) lie on the Cytoplasmic side of the membrane. T1684 and T1687 each carry phosphothreonine. Tyrosine-protein phosphatase domains lie at 1717 to 1992 (FTEE…LVEA) and 2023 to 2282 (LEKQ…ILSL). Residues D1901, 1933 to 1939 (CSAGVGR), and Q1977 contribute to the substrate site. The active-site Phosphocysteine intermediate is the C1933. S2055 is modified (phosphoserine).

This sequence belongs to the protein-tyrosine phosphatase family. Receptor class 5 subfamily. As to quaternary structure, the carbonic-anhydrase like domain interacts with CNTN1 (contactin). Interacts with PTN. Interaction with PTN promotes formation of homooligomers; oligomerization impairs phosphatase activity. Interacts (via chondroitin sulfate chains) with MDK (via C-terminal); this interaction is inhibited by PTN; this interaction promotes neuronal migration. As to expression, specifically expressed in the central nervous system, where it is localized in the Purkinje cell layer of the cerebellum, the dentate gyrus, and the subependymal layer of the anterior horn of the lateral ventricle. Developmentally regulated in the brain.

Its subcellular location is the cell membrane. The protein resides in the secreted. The enzyme catalyses O-phospho-L-tyrosyl-[protein] + H2O = L-tyrosyl-[protein] + phosphate. Functionally, protein tyrosine phosphatase that negatively regulates oligodendrocyte precursor proliferation in the embryonic spinal cord. Required for normal differentiation of the precursor cells into mature, fully myelinating oligodendrocytes. May play a role in protecting oligondendrocytes against apoptosis. May play a role in the establishment of contextual memory, probably via the dephosphorylation of proteins that are part of important signaling cascades. The chain is Receptor-type tyrosine-protein phosphatase zeta (PTPRZ1) from Homo sapiens (Human).